Reading from the N-terminus, the 294-residue chain is Mimecan (294 aa).

An N-terminal signal peptide occupies residues 1-19; the sequence is MKTLQAAFFLVAFVPLVKP. A glycan (N-linked (GlcNAc...) asparagine) is linked at Asn-61. LRR repeat units lie at residues 108 to 127, 128 to 151, 152 to 175, 176 to 195, 196 to 221, 222 to 242, and 243 to 273; these read EAVPPLPKETAYLYARFNKI, KRIAVSDFADITTLRRIDFSGNMI, EEIEDGAFSKLLLLEELSLAENRL, VKLPVLPPKLTTFNANQNRI, KSRGIKNNAFKKLTNLAYLYLGHNAL, ESVPLNLPESLRILHLQHNNI, and TTINDDTFCKSNNTRYIRTRMDEIRMEGNPI. 2 N-linked (GlcNAc...) asparagine glycosylation sites follow: Asn-241 and Asn-254. Cysteines 251 and 284 form a disulfide.

Belongs to the small leucine-rich proteoglycan (SLRP) family. SLRP class III subfamily. In terms of processing, the composition of the N-linked chains or the substitution of the N-linked sites is different between embryonic and adult tissues. Post-translationally, contains keratan sulfate.

It is found in the secreted. The protein resides in the extracellular space. It localises to the extracellular matrix. In terms of biological role, induces bone formation in conjunction with TGF-beta-1 or TGF-beta-2. The polypeptide is Mimecan (OGN) (Gallus gallus (Chicken)).